Here is a 388-residue protein sequence, read N- to C-terminus: Succinate--CoA ligase [ADP-forming] subunit beta (388 aa).

The ATP-grasp domain occupies 9-244 (KQLFAEYGLP…PSQDDAREAH (236 aa)). Residues lysine 46, 53-55 (GRG), glutamate 99, threonine 102, and glutamate 107 contribute to the ATP site. Mg(2+) is bound by residues asparagine 199 and aspartate 213. Substrate is bound by residues asparagine 264 and 321 to 323 (GIV).

Belongs to the succinate/malate CoA ligase beta subunit family. As to quaternary structure, heterotetramer of two alpha and two beta subunits. It depends on Mg(2+) as a cofactor.

The enzyme catalyses succinate + ATP + CoA = succinyl-CoA + ADP + phosphate. It carries out the reaction GTP + succinate + CoA = succinyl-CoA + GDP + phosphate. It functions in the pathway carbohydrate metabolism; tricarboxylic acid cycle; succinate from succinyl-CoA (ligase route): step 1/1. Functionally, succinyl-CoA synthetase functions in the citric acid cycle (TCA), coupling the hydrolysis of succinyl-CoA to the synthesis of either ATP or GTP and thus represents the only step of substrate-level phosphorylation in the TCA. The beta subunit provides nucleotide specificity of the enzyme and binds the substrate succinate, while the binding sites for coenzyme A and phosphate are found in the alpha subunit. The chain is Succinate--CoA ligase [ADP-forming] subunit beta from Pseudomonas paraeruginosa (strain DSM 24068 / PA7) (Pseudomonas aeruginosa (strain PA7)).